The primary structure comprises 178 residues: Ribosome maturation factor RimM (178 aa).

A PRC barrel domain is found at 94–174; sequence KNEFFWFDLI…RIDVINSFDI (81 aa).

The protein belongs to the RimM family. In terms of assembly, binds ribosomal protein uS19.

The protein localises to the cytoplasm. An accessory protein needed during the final step in the assembly of 30S ribosomal subunit, possibly for assembly of the head region. Essential for efficient processing of 16S rRNA. May be needed both before and after RbfA during the maturation of 16S rRNA. It has affinity for free ribosomal 30S subunits but not for 70S ribosomes. This chain is Ribosome maturation factor RimM, found in Aliarcobacter butzleri (strain RM4018) (Arcobacter butzleri).